Consider the following 312-residue polypeptide: Ribosomal RNA small subunit methyltransferase H (312 aa).

S-adenosyl-L-methionine is bound by residues 34-36, aspartate 54, phenylalanine 81, aspartate 102, and glutamine 109; that span reads GGH.

The protein belongs to the methyltransferase superfamily. RsmH family.

Its subcellular location is the cytoplasm. The enzyme catalyses cytidine(1402) in 16S rRNA + S-adenosyl-L-methionine = N(4)-methylcytidine(1402) in 16S rRNA + S-adenosyl-L-homocysteine + H(+). Specifically methylates the N4 position of cytidine in position 1402 (C1402) of 16S rRNA. This chain is Ribosomal RNA small subunit methyltransferase H, found in Geotalea uraniireducens (strain Rf4) (Geobacter uraniireducens).